The following is a 430-amino-acid chain: MAANWEKVENNQGVLTIEVDATQVDAALDQAFKKVVQKVQVPGFRKGKVPRKMFESRFGVESLYQDALDILLPTAYGQAVREAGIEPVDRPEVDVTQMEQGKNLIFKATVTVKPEVKLGDYKGLSIEEKDFSVTEESVDAELKRMQERHAELVAVEEGAAQTGDIAVIDFEGFQDGVAFEGGKAEDYSLELGSGTFIAGFEEQLAGLNIGEEKEITVTFPEEYHSPNLAGKEAVFKVKLNSLKRKNMPVLDDEFAKDVSEFDTLEELKADTKKKLEEKTAQEKDQYVREQLVLKAAENAEIDLPAVMVEHELDQMVNEFGQRLQYQGMTLELYYQFSGMDESQLRDQLRADATSRVRTSLTLEAIGKAENIEATEEDVNAELDKLAGVYGRPADELRKIFSAQDGMAALYRDVQTRKTVDLLVAESKVTA.

One can recognise a PPIase FKBP-type domain in the interval 163–248; that stretch reads GDIAVIDFEG…LNSLKRKNMP (86 aa).

This sequence belongs to the FKBP-type PPIase family. Tig subfamily.

The protein localises to the cytoplasm. The enzyme catalyses [protein]-peptidylproline (omega=180) = [protein]-peptidylproline (omega=0). Involved in protein export. Acts as a chaperone by maintaining the newly synthesized protein in an open conformation. Functions as a peptidyl-prolyl cis-trans isomerase. This is Trigger factor from Brevibacillus brevis (strain 47 / JCM 6285 / NBRC 100599).